The following is a 102-amino-acid chain: Small integral membrane protein 29 (102 aa).

Asparagine 3 is a glycosylation site (N-linked (GlcNAc...) asparagine). A helical membrane pass occupies residues 21-41; sequence VLGPFFLITLVGVVVAVVMYV.

In terms of tissue distribution, expressed in spleen, thymus, prostate, testis, uterus, small intestine, colon and peripheral blood leukocytes.

The protein localises to the membrane. This chain is Small integral membrane protein 29, found in Homo sapiens (Human).